Reading from the N-terminus, the 74-residue chain is MDIVSLKFIGIGFMAIGMYGAALGVSNIFSSLLSAIARNPSAAENLQRMALIGAGLAEAMGLFSFVIAMLLIFS.

A run of 2 helical transmembrane segments spans residues 8-28 (FIGIGFMAIGMYGAALGVSNI) and 52-72 (IGAGLAEAMGLFSFVIAMLLI).

Belongs to the ATPase C chain family. F-type ATPases have 2 components, F(1) - the catalytic core - and F(0) - the membrane proton channel. F(1) has five subunits: alpha(3), beta(3), gamma(1), delta(1), epsilon(1). F(0) has three main subunits: a(1), b(2) and c(10-14). The alpha and beta chains form an alternating ring which encloses part of the gamma chain. F(1) is attached to F(0) by a central stalk formed by the gamma and epsilon chains, while a peripheral stalk is formed by the delta and b chains.

The protein resides in the cell inner membrane. In terms of biological role, f(1)F(0) ATP synthase produces ATP from ADP in the presence of a proton or sodium gradient. F-type ATPases consist of two structural domains, F(1) containing the extramembraneous catalytic core and F(0) containing the membrane proton channel, linked together by a central stalk and a peripheral stalk. During catalysis, ATP synthesis in the catalytic domain of F(1) is coupled via a rotary mechanism of the central stalk subunits to proton translocation. Functionally, key component of the F(0) channel; it plays a direct role in translocation across the membrane. A homomeric c-ring of between 10-14 subunits forms the central stalk rotor element with the F(1) delta and epsilon subunits. This is ATP synthase subunit c from Rickettsia prowazekii (strain Madrid E).